Reading from the N-terminus, the 200-residue chain is ADP-ribosylation factor-like protein 4A (200 aa).

Residue G2 is the site of N-myristoyl glycine attachment. Residues 27–34 (GLDCAGKT), 75–79 (DVGGQ), and 134–137 (NKQD) contribute to the GTP site.

This sequence belongs to the small GTPase superfamily. Arf family. In terms of assembly, interacts with CYTH2. Interacts with KPNA2; the interaction is direct. Does not interact with ARL4A. Myristoylated. In terms of tissue distribution, expressed strongly in testis and liver. Expressed slightly in heart, spleen, lung and kidney.

It localises to the cell membrane. Its subcellular location is the cytoplasm. The protein resides in the nucleus. The protein localises to the nucleolus. In terms of biological role, small GTP-binding protein which cycles between an inactive GDP-bound and an active GTP-bound form, and the rate of cycling is regulated by guanine nucleotide exchange factors (GEF) and GTPase-activating proteins (GAP). GTP-binding protein that does not act as an allosteric activator of the cholera toxin catalytic subunit. Recruits CYTH1, CYTH2, CYTH3 and CYTH4 to the plasma membrane in GDP-bound form. This is ADP-ribosylation factor-like protein 4A (Arl4a) from Mus musculus (Mouse).